Here is a 243-residue protein sequence, read N- to C-terminus: Zinc import ATP-binding protein ZnuC (243 aa).

The 218-residue stretch at 25-242 (LVVDSITLFY…AKFMSVFPEN (218 aa)) folds into the ABC transporter domain. 57-64 (GPNGGGKT) contacts ATP.

This sequence belongs to the ABC transporter superfamily. Zinc importer (TC 3.A.1.15.5) family. In terms of assembly, the complex is composed of two ATP-binding proteins (ZnuC), two transmembrane proteins (ZnuB) and a solute-binding protein (ZnuA).

It is found in the cell inner membrane. The enzyme catalyses Zn(2+)(out) + ATP(in) + H2O(in) = Zn(2+)(in) + ADP(in) + phosphate(in) + H(+)(in). Functionally, part of the ABC transporter complex ZnuABC involved in zinc import. Responsible for energy coupling to the transport system. This chain is Zinc import ATP-binding protein ZnuC, found in Anaplasma phagocytophilum (strain HZ).